We begin with the raw amino-acid sequence, 838 residues long: Probable beta-glucosidase I (838 aa).

The N-linked (GlcNAc...) asparagine glycan is linked to Asn197. Asp225 is a catalytic residue. Residues 395–555 (DGKKGFKFRV…SQEELISKAA (161 aa)) form the PA14 domain. N-linked (GlcNAc...) asparagine glycosylation occurs at Asn493.

It belongs to the glycosyl hydrolase 3 family.

It is found in the secreted. The catalysed reaction is Hydrolysis of terminal, non-reducing beta-D-glucosyl residues with release of beta-D-glucose.. It participates in glycan metabolism; cellulose degradation. Its function is as follows. Beta-glucosidases are one of a number of cellulolytic enzymes involved in the degradation of cellulosic biomass. Catalyzes the last step releasing glucose from the inhibitory cellobiose. This Neosartorya fischeri (strain ATCC 1020 / DSM 3700 / CBS 544.65 / FGSC A1164 / JCM 1740 / NRRL 181 / WB 181) (Aspergillus fischerianus) protein is Probable beta-glucosidase I (bglI).